The primary structure comprises 426 residues: Proline--tRNA ligase (426 aa).

Belongs to the class-II aminoacyl-tRNA synthetase family. ProS type 2 subfamily. Homodimer.

It is found in the cytoplasm. The enzyme catalyses tRNA(Pro) + L-proline + ATP = L-prolyl-tRNA(Pro) + AMP + diphosphate. Functionally, catalyzes the attachment of proline to tRNA(Pro) in a two-step reaction: proline is first activated by ATP to form Pro-AMP and then transferred to the acceptor end of tRNA(Pro). This chain is Proline--tRNA ligase, found in Rickettsia rickettsii (strain Iowa).